We begin with the raw amino-acid sequence, 206 residues long: Probable N-acetyltransferase 14 (206 aa).

Residues L55 to L206 enclose the N-acetyltransferase domain. A helical transmembrane segment spans residues F57–V77.

This sequence belongs to the camello family.

It is found in the membrane. Functionally, probable acetyltransferase. In terms of biological role, may act as a transcription factor regulating the expression of coproporphyrinogen oxidase by binding to a promoter regulatory element. The polypeptide is Probable N-acetyltransferase 14 (NAT14) (Macaca fascicularis (Crab-eating macaque)).